Reading from the N-terminus, the 310-residue chain is Porphobilinogen deaminase (310 aa).

Residue cysteine 242 is modified to S-(dipyrrolylmethanemethyl)cysteine.

It belongs to the HMBS family. Monomer. Dipyrromethane serves as cofactor.

The catalysed reaction is 4 porphobilinogen + H2O = hydroxymethylbilane + 4 NH4(+). The protein operates within porphyrin-containing compound metabolism; protoporphyrin-IX biosynthesis; coproporphyrinogen-III from 5-aminolevulinate: step 2/4. Tetrapolymerization of the monopyrrole PBG into the hydroxymethylbilane pre-uroporphyrinogen in several discrete steps. In Psychromonas ingrahamii (strain DSM 17664 / CCUG 51855 / 37), this protein is Porphobilinogen deaminase.